We begin with the raw amino-acid sequence, 240 residues long: Small ribosomal subunit protein uS3 (240 aa).

The KH type-2 domain maps to 39–107 (IREFIKEECK…ELHLNIVEVR (69 aa)). Basic and acidic residues predominate over residues 212-222 (PQARDRRHAEL). The interval 212–240 (PQARDRRHAELQEGGGPRPQGGGRPRRDR) is disordered. Residues 224–234 (EGGGPRPQGGG) show a composition bias toward gly residues.

Belongs to the universal ribosomal protein uS3 family. Part of the 30S ribosomal subunit. Forms a tight complex with proteins S10 and S14.

Functionally, binds the lower part of the 30S subunit head. Binds mRNA in the 70S ribosome, positioning it for translation. In Dinoroseobacter shibae (strain DSM 16493 / NCIMB 14021 / DFL 12), this protein is Small ribosomal subunit protein uS3.